We begin with the raw amino-acid sequence, 166 residues long: MAKGGAKKAAAAAARAAANRMLADNRQARHQYEILETLETGIELVGTEVKSIRNGKANLRDGFCLIRNGELQLHNVHISPHTHAGNYFNHDPLRTRKLLAHRREIDKFRGLVDQKGLTLIPLSLQLKGSWIKLTIGLGKGRKLHDKRAAEKEKQSKKDVKAAMERY.

Residues K146–Y166 are disordered.

The protein belongs to the SmpB family.

The protein resides in the cytoplasm. Its function is as follows. Required for rescue of stalled ribosomes mediated by trans-translation. Binds to transfer-messenger RNA (tmRNA), required for stable association of tmRNA with ribosomes. tmRNA and SmpB together mimic tRNA shape, replacing the anticodon stem-loop with SmpB. tmRNA is encoded by the ssrA gene; the 2 termini fold to resemble tRNA(Ala) and it encodes a 'tag peptide', a short internal open reading frame. During trans-translation Ala-aminoacylated tmRNA acts like a tRNA, entering the A-site of stalled ribosomes, displacing the stalled mRNA. The ribosome then switches to translate the ORF on the tmRNA; the nascent peptide is terminated with the 'tag peptide' encoded by the tmRNA and targeted for degradation. The ribosome is freed to recommence translation, which seems to be the essential function of trans-translation. The chain is SsrA-binding protein from Synechococcus sp. (strain CC9605).